A 457-amino-acid polypeptide reads, in one-letter code: Putative hexose transporter 12 (457 aa).

Residues methionine 1–glycine 2 lie on the Cytoplasmic side of the membrane. A helical transmembrane segment spans residues leucine 3 to glycine 23. The Extracellular portion of the chain corresponds to aspartate 24–arginine 29. The helical transmembrane segment at isoleucine 30–isoleucine 50 threads the bilayer. Residues asparagine 51–arginine 60 lie on the Cytoplasmic side of the membrane. A helical membrane pass occupies residues isoleucine 61–valine 81. Over alanine 82 to arginine 87 the chain is Extracellular. A helical membrane pass occupies residues glycine 88 to threonine 108. The Cytoplasmic segment spans residues asparagine 109–arginine 122. A helical membrane pass occupies residues valine 123–proline 143. Over glutamate 144–glutamine 247 the chain is Extracellular. The N-linked (GlcNAc...) asparagine glycan is linked to asparagine 194. Residues threonine 248–glutamate 268 traverse the membrane as a helical segment. Over arginine 269–threonine 274 the chain is Cytoplasmic. Residues cysteine 275–valine 295 traverse the membrane as a helical segment. At threonine 296–valine 319 the chain is on the extracellular side. A helical transmembrane segment spans residues phenylalanine 320–valine 340. Residues serine 341–methionine 353 are Cytoplasmic-facing. A helical membrane pass occupies residues alanine 354–isoleucine 374. The Extracellular segment spans residues threonine 375–asparagine 379. Residues phenylalanine 380–phenylalanine 400 form a helical membrane-spanning segment. Over valine 401–serine 457 the chain is Cytoplasmic.

This sequence belongs to the major facilitator superfamily. Sugar transporter (TC 2.A.1.1) family.

Its subcellular location is the membrane. In terms of biological role, probable glucose transporter. The chain is Putative hexose transporter 12 (HXT12) from Saccharomyces cerevisiae (strain ATCC 204508 / S288c) (Baker's yeast).